A 754-amino-acid polypeptide reads, in one-letter code: Polyadenylate-binding protein, cytoplasmic and nuclear (754 aa).

A compositionally biased stretch (polar residues) spans Met1–Ala25. Positions Met1 to Ser52 are disordered. Residues Ser36 to Asn46 are compositionally biased toward low complexity. 4 RRM domains span residues Ala51–Arg129, Gly139–Ser216, Thr232–Lys309, and Val335–Arg465. Disordered stretches follow at residues Lys365 to Asp420 and Arg595 to Pro648. Residues Val366 to Asp420 are compositionally biased toward basic and acidic residues. The span at Gly610–Gly633 shows a compositional bias: gly residues. Low complexity predominate over residues Gln634–Pro648. Positions Ala649–Lys726 constitute a PABC domain. Residues Gly729–Ser754 are disordered.

This sequence belongs to the polyadenylate-binding protein type-1 family.

It localises to the cytoplasm. The protein resides in the nucleus. Binds the poly(A) tail of mRNA. Appears to be an important mediator of the multiple roles of the poly(A) tail in mRNA biogenesis, stability and translation. In the nucleus, involved in both mRNA cleavage and polyadenylation. Is also required for efficient mRNA export to the cytoplasm. Acts in concert with a poly(A)-specific nuclease (PAN) to affect poly(A) tail shortening, which may occur concomitantly with either nucleocytoplasmic mRNA transport or translational initiation. In the cytoplasm, stimulates translation initiation and regulates mRNA decay through translation termination-coupled poly(A) shortening, probably mediated by PAN. The sequence is that of Polyadenylate-binding protein, cytoplasmic and nuclear (pab1) from Aspergillus clavatus (strain ATCC 1007 / CBS 513.65 / DSM 816 / NCTC 3887 / NRRL 1 / QM 1276 / 107).